We begin with the raw amino-acid sequence, 184 residues long: Transcription termination/antitermination protein NusG (184 aa).

A KOW domain is found at 133–163 (EGDQVRVVSGPFADFTGTVTEINPERGKVKV).

The protein belongs to the NusG family.

Functionally, participates in transcription elongation, termination and antitermination. The protein is Transcription termination/antitermination protein NusG of Thermus thermophilus (strain ATCC 27634 / DSM 579 / HB8).